Consider the following 290-residue polypeptide: Arylamine N-acetyltransferase 1 (290 aa).

Met-1 carries the N-acetylmethionine modification. The active-site Acyl-thioester intermediate is the Cys-68. The CoA site is built by Thr-103 and Gly-104. Substrate is bound at residue 106–107 (IH). Catalysis depends on residues His-107 and Asp-122. Positions 208 and 214 each coordinate CoA.

This sequence belongs to the arylamine N-acetyltransferase family.

Its subcellular location is the cytoplasm. The enzyme catalyses an arylamine + acetyl-CoA = an N-acetylarylamine + CoA. Participates in the detoxification of a plethora of hydrazine and arylamine drugs. Catalyzes the N- or O-acetylation of various arylamine and heterocyclic amine substrates and is able to bioactivate several known carcinogens. The protein is Arylamine N-acetyltransferase 1 (NAT1) of Homo sapiens (Human).